A 456-amino-acid polypeptide reads, in one-letter code: tRNA(Ile)-lysidine synthase (456 aa).

28-33 provides a ligand contact to ATP; that stretch reads SGGSDS.

The protein belongs to the tRNA(Ile)-lysidine synthase family.

It localises to the cytoplasm. The enzyme catalyses cytidine(34) in tRNA(Ile2) + L-lysine + ATP = lysidine(34) in tRNA(Ile2) + AMP + diphosphate + H(+). Functionally, ligates lysine onto the cytidine present at position 34 of the AUA codon-specific tRNA(Ile) that contains the anticodon CAU, in an ATP-dependent manner. Cytidine is converted to lysidine, thus changing the amino acid specificity of the tRNA from methionine to isoleucine. The protein is tRNA(Ile)-lysidine synthase of Brucella anthropi (strain ATCC 49188 / DSM 6882 / CCUG 24695 / JCM 21032 / LMG 3331 / NBRC 15819 / NCTC 12168 / Alc 37) (Ochrobactrum anthropi).